The sequence spans 405 residues: Imidazolonepropionase (405 aa).

Histidine 73 and histidine 75 together coordinate Fe(3+). Zn(2+) contacts are provided by histidine 73 and histidine 75. 3 residues coordinate 4-imidazolone-5-propanoate: arginine 82, tyrosine 145, and histidine 178. N-formimidoyl-L-glutamate is bound at residue tyrosine 145. Histidine 243 serves as a coordination point for Fe(3+). A Zn(2+)-binding site is contributed by histidine 243. Glutamine 246 is a 4-imidazolone-5-propanoate binding site. Aspartate 318 is a binding site for Fe(3+). Position 318 (aspartate 318) interacts with Zn(2+). N-formimidoyl-L-glutamate-binding residues include asparagine 320 and glycine 322. Threonine 323 serves as a coordination point for 4-imidazolone-5-propanoate.

This sequence belongs to the metallo-dependent hydrolases superfamily. HutI family. Requires Zn(2+) as cofactor. Fe(3+) is required as a cofactor.

The protein resides in the cytoplasm. It carries out the reaction 4-imidazolone-5-propanoate + H2O = N-formimidoyl-L-glutamate. Its pathway is amino-acid degradation; L-histidine degradation into L-glutamate; N-formimidoyl-L-glutamate from L-histidine: step 3/3. In terms of biological role, catalyzes the hydrolytic cleavage of the carbon-nitrogen bond in imidazolone-5-propanoate to yield N-formimidoyl-L-glutamate. It is the third step in the universal histidine degradation pathway. In Brucella suis biovar 1 (strain 1330), this protein is Imidazolonepropionase.